Here is a 95-residue protein sequence, read N- to C-terminus: DNA-binding protein CENSYa_1764 (95 aa).

Residues 1-21 (MSYTDPDDSLPEHVPGEAEMS) are disordered.

Belongs to the PDCD5 family.

This chain is DNA-binding protein CENSYa_1764, found in Cenarchaeum symbiosum (strain A).